A 203-amino-acid polypeptide reads, in one-letter code: Urease accessory protein UreG (203 aa).

Position 14–21 (14–21) interacts with GTP; the sequence is GPVGSGKT.

The protein belongs to the SIMIBI class G3E GTPase family. UreG subfamily. Homodimer. UreD, UreF and UreG form a complex that acts as a GTP-hydrolysis-dependent molecular chaperone, activating the urease apoprotein by helping to assemble the nickel containing metallocenter of UreC. The UreE protein probably delivers the nickel.

Its subcellular location is the cytoplasm. Functionally, facilitates the functional incorporation of the urease nickel metallocenter. This process requires GTP hydrolysis, probably effectuated by UreG. The protein is Urease accessory protein UreG of Rhizobium rhizogenes (strain K84 / ATCC BAA-868) (Agrobacterium radiobacter).